Here is a 119-residue protein sequence, read N- to C-terminus: Basic phospholipase A2 notechis II-5 (119 aa).

Disulfide bonds link Cys11–Cys71, Cys27–Cys118, Cys29–Cys45, Cys44–Cys99, Cys51–Cys92, Cys60–Cys85, and Cys78–Cys90. Ca(2+)-binding residues include Tyr28, Gly30, and Gly32. His48 is an active-site residue. Ca(2+) is bound at residue Asp49. The active site involves Asp93.

It belongs to the phospholipase A2 family. Group I subfamily. D49 sub-subfamily. It depends on Ca(2+) as a cofactor. In terms of tissue distribution, expressed by the venom gland.

It localises to the secreted. The enzyme catalyses a 1,2-diacyl-sn-glycero-3-phosphocholine + H2O = a 1-acyl-sn-glycero-3-phosphocholine + a fatty acid + H(+). In terms of biological role, snake venom phospholipase A2 (PLA2) that inhibits neuromuscular transmission by blocking acetylcholine release from the nerve termini. Notechis II-5 is less toxic than notexin but has a higher specific phospholipase activity. PLA2 catalyzes the calcium-dependent hydrolysis of the 2-acyl groups in 3-sn-phosphoglycerides. The polypeptide is Basic phospholipase A2 notechis II-5 (Notechis scutatus scutatus (Mainland tiger snake)).